A 1848-amino-acid chain; its full sequence is Unconventional myosin-Vb (1848 aa).

At Met1 the chain carries N-acetylmethionine. One can recognise a Myosin N-terminal SH3-like domain in the interval 8–60 (SQCTRVWIPDPDEVWRSAELTKDYKEGDKSLQLRLEDETILEYPIDVQRNQLP). Residues 21 to 40 (VWRSAELTKDYKEGDKSLQL) are requires for interaction with LIMA1. The Myosin motor domain maps to 69-761 (VGENDLTALS…QVAYLEKLRA (693 aa)). ATP is bound at residue 163-170 (GESGAGKT). Residues 596–630 (KDPVPATTPGKGSSSKISVRSARPPMKVSNKEHKK) form a disordered region. Residues 640–662 (LHLLMETLNATTPHYVRCIKPND) are actin-binding. 6 IQ domains span residues 769-798 (IMIQ…QRYC), 792-821 (LTLQ…VLQK), 817-848 (VVLQ…FTRA), 840-869 (VVIQ…TIQK), 865-896 (TTIQ…AFRM), and 888-917 (IVIQ…EHLK). Coiled coils occupy residues 899–1266 (ARRE…ILRT) and 1341–1471 (RLLE…GMLE). Disordered regions lie at residues 1093–1123 (QTPG…EIGD) and 1166–1192 (QLEK…LDPN). Residues 1101-1121 (PSNQSSLESDSNYPSISTSEI) show a composition bias toward polar residues. Residues 1166–1179 (QLEKREQQDSKKVQ) show a composition bias toward basic and acidic residues. Ser1446 bears the Phosphoserine mark. Residues 1526–1803 (TSTINGIKKV…IRTIQAQLQE (278 aa)) form the Dilute domain.

Belongs to the TRAFAC class myosin-kinesin ATPase superfamily. Myosin family. Component of the CART complex, at least composed of ACTN4, HGS/HRS, MYO5B and TRIM3. Interacts with RAB11FIP2, RAB11A, and RAB8A. Found in a complex with CFTR and RAB11A. Interacts with NPC1L1;. Interacts with LIMA1.

It localises to the cytoplasm. In terms of biological role, may be involved in vesicular trafficking via its association with the CART complex. The CART complex is necessary for efficient transferrin receptor recycling but not for EGFR degradation. Required in a complex with RAB11A and RAB11FIP2 for the transport of NPC1L1 to the plasma membrane. Together with RAB11A participates in CFTR trafficking to the plasma membrane and TF (transferrin) recycling in nonpolarized cells. Together with RAB11A and RAB8A participates in epithelial cell polarization. Together with RAB25 regulates transcytosis. Required for proper localization of bile salt export pump ABCB11 at the apical/canalicular plasma membrane of hepatocytes. This chain is Unconventional myosin-Vb (MYO5B), found in Homo sapiens (Human).